The primary structure comprises 257 residues: tRNA pseudouridine synthase A (257 aa).

The active-site Nucleophile is the D53. A substrate-binding site is contributed by Y111.

This sequence belongs to the tRNA pseudouridine synthase TruA family. Homodimer.

The catalysed reaction is uridine(38/39/40) in tRNA = pseudouridine(38/39/40) in tRNA. In terms of biological role, formation of pseudouridine at positions 38, 39 and 40 in the anticodon stem and loop of transfer RNAs. This is tRNA pseudouridine synthase A from Xanthomonas axonopodis pv. citri (strain 306).